The primary structure comprises 143 residues: HTH-type transcriptional regulator BudR (143 aa).

In terms of domain architecture, HTH lysR-type spans 1 to 58; the sequence is MELRYLRYFVAVARERHFTRAAKALGISQPPLSQQIKRLEEEVGTPLFRRLTRGVELT. A DNA-binding region (H-T-H motif) is located at residues 18–37; the sequence is FTRAAKALGISQPPLSQQIK.

It belongs to the LysR transcriptional regulatory family.

In terms of biological role, regulator of the budABC operon for 2,3-butanediol synthesis. This chain is HTH-type transcriptional regulator BudR (budR), found in Klebsiella aerogenes (Enterobacter aerogenes).